A 479-amino-acid chain; its full sequence is MKFTLINEIIQHFKGDAVVVFSNSNTVFNDDNIQQLIKLNHFDSKPGKVLLLNLVSGFKSKQVIVSGLGDAPISAKNYVKALNAVIVILVEIKAKNLMVQHVGIKGFNELWVHEITAKVMCNATYKVQKVGNYKKQNSGIERITIQSTMDSVYGLMKGQAIADGMSLTRHLGDLPSNVCTPSYLAGTAISLAQEFNLECEVLEEVDMEKLGMGSLLAVSKGSSEPPKLISLSYRGNGNEKPIVLVGKGVTFDSGGISLKPGTGMDEMKYDMCGAASVLGVMRVIAQIKPNINLVVVLPAVENMPAHNASKPGDVVKSMSGKTIEILNTDAEGRLILCDALTYVKKFNPEVVIDIATLTGAVVVALGKYNSGLMSNDKNLANDIISASKVSLDGVWQLPIEDEYDELLQSNFADMANIGGSSEAGSITAGCFLSRFTQGYRWAHLDIAGTAWVSGDKKGATGRPVSLLTQFIMDQVQKRL.

Mn(2+) contacts are provided by K247 and D252. The active site involves K259. The Mn(2+) site is built by D270, D329, and E331. Residue R333 is part of the active site.

Belongs to the peptidase M17 family. Mn(2+) is required as a cofactor.

It localises to the cytoplasm. The catalysed reaction is Release of an N-terminal amino acid, Xaa-|-Yaa-, in which Xaa is preferably Leu, but may be other amino acids including Pro although not Arg or Lys, and Yaa may be Pro. Amino acid amides and methyl esters are also readily hydrolyzed, but rates on arylamides are exceedingly low.. It carries out the reaction Release of an N-terminal amino acid, preferentially leucine, but not glutamic or aspartic acids.. In terms of biological role, presumably involved in the processing and regular turnover of intracellular proteins. Catalyzes the removal of unsubstituted N-terminal amino acids from various peptides. The polypeptide is Probable cytosol aminopeptidase (Vesicomyosocius okutanii subsp. Calyptogena okutanii (strain HA)).